A 413-amino-acid polypeptide reads, in one-letter code: Zeaxanthin glucosyltransferase (413 aa).

Belongs to the UDP-glycosyltransferase family.

It catalyses the reaction all-trans-zeaxanthin + 2 UDP-alpha-D-glucose = zeaxanthin bis(beta-D-glucoside) + 2 UDP + 2 H(+). Its pathway is carotenoid biosynthesis; zeaxanthin diglucoside biosynthesis. Its function is as follows. Catalyzes the glycosylation reaction which converts zeaxanthin to zeaxanthin bis(beta-D-glucoside). The reaction proceeds in two steps with the monoglucoside as an intermediate. The chain is Zeaxanthin glucosyltransferase (crtX) from Pseudescherichia vulneris (Escherichia vulneris).